The chain runs to 248 residues: Anamorsin homolog (248 aa).

The tract at residues 4–129 is N-terminal SAM-like domain; the sequence is FKGLQKTLYI…ETGSSARLSF (126 aa). Positions 130–161 are linker; it reads AKKDASALNVWKISGDDEELIDEEDLLDEEDK. [2Fe-2S] cluster is bound by residues Cys172, Cys181, Cys184, and Cys186. The segment at 172-186 is fe-S binding site A; that stretch reads CSTTGKRKACKNCSC. Residues Cys209, Cys212, Cys220, and Cys223 each contribute to the [4Fe-4S] cluster site. Short sequence motifs (cx2C motif) lie at residues 209 to 212 and 220 to 223; these read CGNC and CSTC. A fe-S binding site B region spans residues 209–223; sequence CGNCYLGDAFRCSTC.

Belongs to the anamorsin family. In terms of assembly, monomer. It depends on [2Fe-2S] cluster as a cofactor. [4Fe-4S] cluster serves as cofactor.

The protein resides in the cytoplasm. It localises to the mitochondrion intermembrane space. Component of the cytosolic iron-sulfur (Fe-S) protein assembly (CIA) machinery. Required for the maturation of extramitochondrial Fe-S proteins. Part of an electron transfer chain functioning in an early step of cytosolic Fe-S biogenesis, facilitating the de novo assembly of a [4Fe-4S] cluster on the cytosolic Fe-S scaffold complex. Electrons are transferred from NADPH via a FAD- and FMN-containing diflavin oxidoreductase. Together with the diflavin oxidoreductase, also required for the assembly of the diferric tyrosyl radical cofactor of ribonucleotide reductase (RNR), probably by providing electrons for reduction during radical cofactor maturation in the catalytic small subunit. This is Anamorsin homolog from Drosophila ananassae (Fruit fly).